Here is a 158-residue protein sequence, read N- to C-terminus: Frataxin homolog, mitochondrial (158 aa).

Belongs to the frataxin family. As to quaternary structure, monomer. Oligomer.

The protein resides in the mitochondrion. The enzyme catalyses 4 Fe(2+) + O2 + 4 H(+) = 4 Fe(3+) + 2 H2O. Promotes the biosynthesis of heme as well as the assembly and repair of iron-sulfur clusters by delivering Fe(2+) to proteins involved in these pathways. May play a role in the protection against iron-catalyzed oxidative stress through its ability to catalyze the oxidation of Fe(2+) to Fe(3+). May be able to store large amounts of the metal in the form of a ferrihydrite mineral by oligomerization. This chain is Frataxin homolog, mitochondrial, found in Schizosaccharomyces pombe (strain 972 / ATCC 24843) (Fission yeast).